A 200-amino-acid polypeptide reads, in one-letter code: Guanylate kinase (200 aa).

The Guanylate kinase-like domain maps to 4–183 (GAVLIISGPS…AKEAMVAIAR (180 aa)). Position 11–18 (11–18 (GPSGCGKS)) interacts with ATP.

It belongs to the guanylate kinase family.

The protein resides in the cytoplasm. The enzyme catalyses GMP + ATP = GDP + ADP. Its function is as follows. Essential for recycling GMP and indirectly, cGMP. The protein is Guanylate kinase of Helicobacter hepaticus (strain ATCC 51449 / 3B1).